We begin with the raw amino-acid sequence, 78 residues long: UPF0291 protein Exig_1097 (78 aa).

The tract at residues 57-78 is disordered; it reads EEGTDVTPEKLKQAQEEERNKQ. Positions 63–78 are enriched in basic and acidic residues; the sequence is TPEKLKQAQEEERNKQ.

Belongs to the UPF0291 family.

The protein resides in the cytoplasm. The polypeptide is UPF0291 protein Exig_1097 (Exiguobacterium sibiricum (strain DSM 17290 / CCUG 55495 / CIP 109462 / JCM 13490 / 255-15)).